We begin with the raw amino-acid sequence, 447 residues long: Nisin biosynthesis sensor protein NisK (447 aa).

A run of 2 helical transmembrane segments spans residues 15–35 (VIEI…LTFF) and 147–167 (TYLF…YHLI). Residues 235 to 447 (ALSHDVKTPL…GAEVILKIKK (213 aa)) form the Histidine kinase domain. His-238 is modified (phosphohistidine; by autocatalysis).

The protein localises to the cell membrane. It carries out the reaction ATP + protein L-histidine = ADP + protein N-phospho-L-histidine.. Member of the two-component regulatory system NisK/NisR involved in the regulation of the biosynthesis of lantibiotic nisin. NisK may function as a membrane-associated protein kinase that phosphorylates NisR in response to environmental signals. This chain is Nisin biosynthesis sensor protein NisK (nisK), found in Lactococcus lactis subsp. lactis (Streptococcus lactis).